Reading from the N-terminus, the 273-residue chain is 5-deoxy-glucuronate isomerase (273 aa).

This sequence belongs to the isomerase IolB family.

It catalyses the reaction 5-deoxy-D-glucuronate = 5-dehydro-2-deoxy-D-gluconate. Its pathway is polyol metabolism; myo-inositol degradation into acetyl-CoA; acetyl-CoA from myo-inositol: step 4/7. In terms of biological role, involved in the isomerization of 5-deoxy-glucuronate (5DG) to 5-dehydro-2-deoxy-D-gluconate (DKG or 2-deoxy-5-keto-D-gluconate). This is 5-deoxy-glucuronate isomerase from Listeria monocytogenes serotype 4b (strain CLIP80459).